The chain runs to 968 residues: RNA polymerase-associated protein RapA (968 aa).

The 171-residue stretch at 164-334 (DVGRRHAPRV…FARLRLLDPN (171 aa)) folds into the Helicase ATP-binding domain. Position 177-184 (177-184 (DEVGLGKT)) interacts with ATP. Residues 280 to 283 (DEAH) carry the DEAH box motif. A Helicase C-terminal domain is found at 490–662 (RVEWLMGYLT…YLASPDQTEG (173 aa)).

This sequence belongs to the SNF2/RAD54 helicase family. RapA subfamily. Interacts with the RNAP. Has a higher affinity for the core RNAP than for the holoenzyme. Its ATPase activity is stimulated by binding to RNAP.

Functionally, transcription regulator that activates transcription by stimulating RNA polymerase (RNAP) recycling in case of stress conditions such as supercoiled DNA or high salt concentrations. Probably acts by releasing the RNAP, when it is trapped or immobilized on tightly supercoiled DNA. Does not activate transcription on linear DNA. Probably not involved in DNA repair. The sequence is that of RNA polymerase-associated protein RapA from Shigella boydii serotype 18 (strain CDC 3083-94 / BS512).